Reading from the N-terminus, the 495-residue chain is MSVSDKDFKDIELLPVKSIESKDSIDQCDPLTWPIRIRIINTIIISFMTMLCMYGSSVFMPSIPELCEKFGEPETLVVLGATLYVIGVMLGPLIFSPLSELYGRRPLNIFGYTLFALMQIPTALSVNLAMFVVFRFFSGFFGSVGLGIGAGSLSDMFSKRDRGKYIGIYFLGICLGPAIAPIASGFIAGSSISWRWEFWILLMLSGVSLLAGVVFLKETYAPVLKRKQAKKLLEKQENQKSVEVKISEITESSQQIDPDKSFAEVVHILVTTIRRPLHLLCTQPIMILISLIVGTVYGILYLLFTAFAEVWISQYHFTSGLSGLTYISLSIGQVFAVFVLLPLNQKYWLSAVQKNNGVPEPEFRLPMAFLGCFAIMTGMFIFGWTVQYKVFWFVPLIGTTLVGAGFVMTFNPMNMFIVDNYGRYAASAMAAIAIPRNIFGACFPLFAEKLFERLGYGWGSSLLAFLLVAINFSIAALYMFGKTIREKRPFDHTKY.

A run of 12 helical transmembrane segments spans residues 43-63 (IIIS…MPSI), 75-95 (TLVV…PLIF), 106-126 (PLNI…ALSV), 128-148 (LAMF…GLGI), 168-188 (IYFL…GFIA), 196-216 (WEFW…VVFL), 284-304 (PIMI…YLLF), 323-343 (GLTY…LLPL), 366-386 (PMAF…GWTV), 390-410 (VFWF…VMTF), 426-446 (ASAM…FPLF), and 461-481 (SLLA…YMFG).

Belongs to the major facilitator superfamily. CAR1 family.

The protein resides in the membrane. This is an uncharacterized protein from Schizosaccharomyces pombe (strain 972 / ATCC 24843) (Fission yeast).